The chain runs to 904 residues: Dynamin-like protein C (904 aa).

Positions 44–102 (IAEAMALKMHEEEKKKREEKKRKRDNEELLSKQVRTKLENERKKLDDSESINASTNQEL) form a coiled coil. Positions 53–93 (HEEEKKKREEKKRKRDNEELLSKQVRTKLENERKKLDDSES) are disordered. Basic and acidic residues predominate over residues 67–90 (RDNEELLSKQVRTKLENERKKLDD). Residues 119–441 (SFDTPELVVV…HEKYQQNLLP (323 aa)) enclose the Dynamin-type G domain. A G1 motif region spans residues 129–136 (GMQSDGKS). A GTP-binding site is contributed by 129–136 (GMQSDGKS). A G2 motif region spans residues 155–157 (GTR). The segment at 169–227 (SKQQPSCRFKKEDYSNSYGGSSSSTSTTSGNSNHNTDKQQNVSSSQGGGGGSNNLNEDK) is disordered. Residues 183 to 213 (SNSYGGSSSSTSTTSGNSNHNTDKQQNVSSS) show a composition bias toward low complexity. The segment at 278–281 (DTPG) is G3 motif. GTP-binding positions include 278–282 (DTPGF) and 343–346 (TKFD). The G4 motif stretch occupies residues 343–346 (TKFD). Residues 378 to 381 (LPLK) form a G5 motif region. The stretch at 781–811 (EMFQLGLKELENKLHKLEFQLIDCKKNRDKF) forms a coiled coil. Disordered stretches follow at residues 821-840 (SLNQNQNQNSSSSSNSASSS) and 853-904 (NGKF…FDQN). The span at 853-876 (NGKFSTPDKNSLTMSPFTSPFTQS) shows a compositional bias: polar residues. Over residues 877 to 891 (NYHQHNNNNYQINQQ) the composition is skewed to low complexity.

The protein belongs to the TRAFAC class dynamin-like GTPase superfamily. Dynamin/Fzo/YdjA family.

Its subcellular location is the cytoplasm. The enzyme catalyses GTP + H2O = GDP + phosphate + H(+). Involved in cytokinesis. May hydrolyze GTP. This Dictyostelium discoideum (Social amoeba) protein is Dynamin-like protein C (dlpC).